Here is a 346-residue protein sequence, read N- to C-terminus: D-alanine--D-alanine ligase (346 aa).

In terms of domain architecture, ATP-grasp spans 133–326; that stretch reads KFLAQKAGVK…LANSLPKERE (194 aa). 159-209 contributes to the ATP binding site; that stretch reads YPIILKPARLGSSIGVSVVHDDSELAYAKDVAFEFDKDVLVEPFIKGVKEY. The Mg(2+) site is built by Asp-282, Glu-294, and Asn-296.

It belongs to the D-alanine--D-alanine ligase family. Requires Mg(2+) as cofactor. Mn(2+) serves as cofactor.

It localises to the cytoplasm. The enzyme catalyses 2 D-alanine + ATP = D-alanyl-D-alanine + ADP + phosphate + H(+). The protein operates within cell wall biogenesis; peptidoglycan biosynthesis. Its function is as follows. Cell wall formation. The sequence is that of D-alanine--D-alanine ligase from Campylobacter concisus (strain 13826).